Here is a 339-residue protein sequence, read N- to C-terminus: Ornithine carbamoyltransferase (339 aa).

Residues 56-59, arginine 107, and 134-137 each bind carbamoyl phosphate; these read STRT and HPTQ. L-ornithine-binding positions include asparagine 168, aspartate 232, and 236–237; that span reads SM. Residues 274-275 and arginine 320 each bind carbamoyl phosphate; that span reads CL.

The protein belongs to the aspartate/ornithine carbamoyltransferase superfamily. OTCase family.

Its subcellular location is the cytoplasm. It catalyses the reaction carbamoyl phosphate + L-ornithine = L-citrulline + phosphate + H(+). It functions in the pathway amino-acid biosynthesis; L-arginine biosynthesis; L-arginine from L-ornithine and carbamoyl phosphate: step 1/3. Its function is as follows. Reversibly catalyzes the transfer of the carbamoyl group from carbamoyl phosphate (CP) to the N(epsilon) atom of ornithine (ORN) to produce L-citrulline. The chain is Ornithine carbamoyltransferase from Buchnera aphidicola subsp. Baizongia pistaciae (strain Bp).